Reading from the N-terminus, the 255-residue chain is Imidazole glycerol phosphate synthase subunit HisF (255 aa).

Catalysis depends on residues aspartate 11 and aspartate 130.

This sequence belongs to the HisA/HisF family. In terms of assembly, heterodimer of HisH and HisF.

Its subcellular location is the cytoplasm. The enzyme catalyses 5-[(5-phospho-1-deoxy-D-ribulos-1-ylimino)methylamino]-1-(5-phospho-beta-D-ribosyl)imidazole-4-carboxamide + L-glutamine = D-erythro-1-(imidazol-4-yl)glycerol 3-phosphate + 5-amino-1-(5-phospho-beta-D-ribosyl)imidazole-4-carboxamide + L-glutamate + H(+). Its pathway is amino-acid biosynthesis; L-histidine biosynthesis; L-histidine from 5-phospho-alpha-D-ribose 1-diphosphate: step 5/9. IGPS catalyzes the conversion of PRFAR and glutamine to IGP, AICAR and glutamate. The HisF subunit catalyzes the cyclization activity that produces IGP and AICAR from PRFAR using the ammonia provided by the HisH subunit. In Synechococcus sp. (strain ATCC 27144 / PCC 6301 / SAUG 1402/1) (Anacystis nidulans), this protein is Imidazole glycerol phosphate synthase subunit HisF.